A 187-amino-acid polypeptide reads, in one-letter code: Intermembrane transport lipoprotein PqiC (187 aa).

A signal peptide spans 1–15 (MKKWLVTIAALWLAG). Cys16 is lipidated: N-palmitoyl cysteine. A lipid anchor (S-diacylglycerol cysteine) is attached at Cys16.

In terms of assembly, may form a complex composed of PqiA, PqiB and PqiC. Interacts with PqiB.

Its subcellular location is the cell outer membrane. Its function is as follows. Component of a transport pathway that contributes to membrane integrity. This Escherichia coli (strain K12) protein is Intermembrane transport lipoprotein PqiC.